A 228-amino-acid chain; its full sequence is MVKSSLQRILNSHCFAREKEGDKPSATIHASRTMPLLSLHSRGGSSSESSRVSLHCCSNPGPGPRWCSDAPHPPLKIPGGRGNSQRDHNLSANLFYSDDRLNVTEELTSNDKTRILNVQSRLTDAKRINWRTVLSGGSLYIEIPGGALPEGSKDSFAVLLEFAEEQLRADHVFICFHKNREDRAALLRTFSFLGFEIVRPGHPLVPKRPDACFMAYTFERESSGEEEE.

The disordered stretch occupies residues 17–55; sequence REKEGDKPSATIHASRTMPLLSLHSRGGSSSESSRVSLH. Low complexity predominate over residues 36–55; sequence LLSLHSRGGSSSESSRVSLH.

Belongs to the ODC antizyme family. In terms of assembly, interacts with ODC1 and thereby sterically blocks ODC homodimerization. Forms a ternary complex with PSMB4 and OAZ1 before PSMB4 is incorporated into the 20S proteasome. Interacts with AZIN2; this interaction disrupts the interaction between the antizyme and ODC1. Interacts with FAM171A1.

In terms of biological role, ornithine decarboxylase (ODC) antizyme protein that negatively regulates ODC activity and intracellular polyamine biosynthesis and uptake in response to increased intracellular polyamine levels. Binds to ODC monomers, inhibiting the assembly of the functional ODC homodimer, and targets the monomers for ubiquitin-independent proteolytic destruction by the 26S proteasome. Triggers ODC degradation by inducing the exposure of a cryptic proteasome-interacting surface of ODC. Stabilizes AZIN2 by interfering with its ubiquitination. Also inhibits cellular uptake of polyamines by inactivating the polyamine uptake transporter. SMAD1/OAZ1/PSMB4 complex mediates the degradation of the CREBBP/EP300 repressor SNIP1. Involved in the translocation of AZIN2 from ER-Golgi intermediate compartment (ERGIC) to the cytosol. The polypeptide is Ornithine decarboxylase antizyme 1 (OAZ1) (Homo sapiens (Human)).